The following is a 145-amino-acid chain: Large ribosomal subunit protein uL11 (145 aa).

The protein belongs to the universal ribosomal protein uL11 family. In terms of assembly, part of the ribosomal stalk of the 50S ribosomal subunit. Interacts with L10 and the large rRNA to form the base of the stalk. L10 forms an elongated spine to which L12 dimers bind in a sequential fashion forming a multimeric L10(L12)X complex. In terms of processing, one or more lysine residues are methylated.

Functionally, forms part of the ribosomal stalk which helps the ribosome interact with GTP-bound translation factors. This chain is Large ribosomal subunit protein uL11, found in Rickettsia typhi (strain ATCC VR-144 / Wilmington).